Reading from the N-terminus, the 62-residue chain is Alpha-conotoxin-like Bn1.3 (62 aa).

Residues 1–18 (MGMRMMFTVFLLVVLATA) form the signal peptide. Positions 19 to 48 (VLPVTLDRASDGRNAAANAKTPRLIAPFIR) are excised as a propeptide. Cystine bridges form between Cys51/Cys57 and Cys52/Cys61. Cys61 bears the Cysteine amide mark.

The protein belongs to the conotoxin A superfamily. Expressed by the venom duct.

It is found in the secreted. Does not show activity on the acetylcholine receptors tested. In Conus bandanus (Banded marble cone), this protein is Alpha-conotoxin-like Bn1.3.